Reading from the N-terminus, the 302-residue chain is Homoserine O-acetyltransferase (302 aa).

The active-site Acyl-thioester intermediate is C142. Residues K163 and S192 each coordinate substrate. Catalysis depends on H235, which acts as the Proton acceptor. The active site involves E237. R249 lines the substrate pocket.

It belongs to the MetA family.

The protein localises to the cytoplasm. The enzyme catalyses L-homoserine + acetyl-CoA = O-acetyl-L-homoserine + CoA. It functions in the pathway amino-acid biosynthesis; L-methionine biosynthesis via de novo pathway; O-acetyl-L-homoserine from L-homoserine: step 1/1. Functionally, transfers an acetyl group from acetyl-CoA to L-homoserine, forming acetyl-L-homoserine. The protein is Homoserine O-acetyltransferase of Geobacillus kaustophilus.